The following is a 1888-amino-acid chain: E3 ubiquitin-protein ligase UPL3 (1888 aa).

Positions 1–10 (METRSRKRAE) are enriched in basic and acidic residues. A disordered region spans residues 1-157 (METRSRKRAE…NGGFMHPNMS (157 aa)). The segment covering 41 to 81 (LSSSSSSSLAPTPPSSSTTTRSRSSRSAAAAAPMDTSTDSS) has biased composition (low complexity). Residues 97–124 (NSDKGKEKEHDVRIRERERERDRAREQL) are compositionally biased toward basic and acidic residues. Over residues 137 to 146 (DEDDDNDSED) the composition is skewed to acidic residues. ARM repeat units lie at residues 227-267 (EDSL…HLCD), 270-310 (PSSC…KISQ), 312-349 (HPTACLRAGALMAVLSYLDFFSTGVQRVALSTAANMCK), and 351-390 (LPSDASDYVMEAVPLLTNLLQYHDSKVLEYASICLTRIAE). 4 disordered regions span residues 660–711 (KPSH…IGAN), 970–1119 (ALKP…LPMC), 1134–1157 (DDDGLATSGRQMNPASGGTSGAAA), and 1280–1307 (RLSVGGASSTTPSKSTKSATTNSSVESQ). A compositionally biased stretch (low complexity) spans 986-1002 (PSGAGVSSPSSSTPAST). Residues 1019 to 1029 (TSKKDPVHEKG) show a composition bias toward basic and acidic residues. Residues 1076 to 1113 (SSEDEELEISPVDIDDALVIEEDDISDDEDDDNEDVLD) show a composition bias toward acidic residues. Composition is skewed to low complexity over residues 1148-1157 (ASGGTSGAAA) and 1286-1303 (ASSTTPSKSTKSATTNSS). A K-box region spans residues 1377 to 1451 (AKVPLDEFVN…ALNRLQQQQG (75 aa)). The region spanning 1490–1888 (MYSSQKAVLE…NEGQGSFDLS (399 aa)) is the HECT domain. Cys1855 serves as the catalytic Glycyl thioester intermediate.

The protein belongs to the UPL family. K-HECT subfamily. As to expression, widely expressed.

It carries out the reaction S-ubiquitinyl-[E2 ubiquitin-conjugating enzyme]-L-cysteine + [acceptor protein]-L-lysine = [E2 ubiquitin-conjugating enzyme]-L-cysteine + N(6)-ubiquitinyl-[acceptor protein]-L-lysine.. Its pathway is protein modification; protein ubiquitination. In terms of biological role, probable E3 ubiquitin-protein ligase which mediates ubiquitination and subsequent proteasomal degradation of target proteins. Involved in the repression of endoreduplication process and the cell morphogenesis in the trichomes. In Arabidopsis thaliana (Mouse-ear cress), this protein is E3 ubiquitin-protein ligase UPL3 (UPL3).